Reading from the N-terminus, the 77-residue chain is UPF0213 protein VNG_2274C (77 aa).

The region spanning 1–75 (MHHVYVIECS…KQLSRAQKEA (75 aa)) is the GIY-YIG domain.

Belongs to the UPF0213 family.

In Halobacterium salinarum (strain ATCC 700922 / JCM 11081 / NRC-1) (Halobacterium halobium), this protein is UPF0213 protein VNG_2274C.